A 90-amino-acid chain; its full sequence is Small ribosomal subunit protein uS15 (90 aa).

Belongs to the universal ribosomal protein uS15 family. As to quaternary structure, part of the 30S ribosomal subunit. Forms a bridge to the 50S subunit in the 70S ribosome, contacting the 23S rRNA.

Functionally, one of the primary rRNA binding proteins, it binds directly to 16S rRNA where it helps nucleate assembly of the platform of the 30S subunit by binding and bridging several RNA helices of the 16S rRNA. Its function is as follows. Forms an intersubunit bridge (bridge B4) with the 23S rRNA of the 50S subunit in the ribosome. The chain is Small ribosomal subunit protein uS15 from Herpetosiphon aurantiacus (strain ATCC 23779 / DSM 785 / 114-95).